We begin with the raw amino-acid sequence, 324 residues long: Aldo-keto reductase family 1 member A1 (324 aa).

The residue at position 3 (S3) is a Phosphoserine. NADP(+)-binding positions include 10-19, T20, and W21; that span reads GQKMPLIGLG. S37 carries the post-translational modification Phosphoserine. An NADP(+)-binding site is contributed by D44. Y49 functions as the Proton donor in the catalytic mechanism. K126 is subject to N6-acetyllysine; alternate. The residue at position 126 (K126) is an N6-succinyllysine; alternate. K144 is subject to N6-succinyllysine. 13 residues coordinate NADP(+): S161, N162, S210, L212, S214, S215, K262, S263, I264, T265, R268, Q271, and N272. S210 is subject to Phosphoserine.

The protein belongs to the aldo/keto reductase family.

The protein resides in the cytoplasm. It localises to the cytosol. The protein localises to the apical cell membrane. It catalyses the reaction a primary alcohol + NADP(+) = an aldehyde + NADPH + H(+). The enzyme catalyses L-gulonate + NADP(+) = aldehydo-D-glucuronate + NADPH + H(+). It carries out the reaction L-gulono-1,4-lactone + NADP(+) = D-glucurono-3,6-lactone + NADPH + H(+). The catalysed reaction is allyl alcohol + NADP(+) = acrolein + NADPH + H(+). It catalyses the reaction glycerol + NADP(+) = D-glyceraldehyde + NADPH + H(+). The enzyme catalyses glycerol + NADP(+) = L-glyceraldehyde + NADPH + H(+). It carries out the reaction hydroxyacetone + NADP(+) = methylglyoxal + NADPH + H(+). The catalysed reaction is 3-deoxyfructose + NADP(+) = 3-deoxyglucosone + NADPH + H(+). It catalyses the reaction (R)-mevalonate + NADP(+) = (R)-mevaldate + NADPH + H(+). The enzyme catalyses S-nitroso-CoA + NADPH + H(+) = sulfinamide-CoA + NADP(+). It carries out the reaction S-nitrosoglutathione + NADPH + H(+) = S-(hydroxysulfenamide)glutathione + NADP(+). In terms of biological role, catalyzes the NADPH-dependent reduction of a wide variety of carbonyl-containing compounds to their corresponding alcohols. Displays enzymatic activity towards endogenous metabolites such as aromatic and aliphatic aldehydes, ketones, monosaccharides and bile acids, with a preference for negatively charged substrates, such as glucuronate and succinic semialdehyde. Plays an important role by catalyzing the reduction of D-glucuronic acid and D-glucurono-gamma-lactone. Functions as a detoxifiying enzyme by reducing a range of toxic aldehydes. Reduces methylglyoxal and 3-deoxyglucosone, which are present at elevated levels under hyperglycemic conditions and are cytotoxic. Involved also in the detoxification of lipid-derived aldehydes like acrolein. Plays a role in the activation of procarcinogens, such as polycyclic aromatic hydrocarbon trans-dihydrodiols, and in the metabolism of various xenobiotics and drugs. Also acts as an inhibitor of protein S-nitrosylation by mediating degradation of S-nitroso-coenzyme A (S-nitroso-CoA), a cofactor required to S-nitrosylate proteins. S-nitroso-CoA reductase activity is involved in reprogramming intermediary metabolism in renal proximal tubules, notably by inhibiting protein S-nitrosylation of isoform 2 of PKM (PKM2). Also acts as a S-nitroso-glutathione reductase by catalyzing the NADPH-dependent reduction of S-nitrosoglutathione. Displays no reductase activity towards retinoids. In Cricetulus griseus (Chinese hamster), this protein is Aldo-keto reductase family 1 member A1 (AKR1A1).